The following is a 492-amino-acid chain: Xaa-Pro dipeptidase (492 aa).

An N-acetylalanine modification is found at Ala-2. Phosphoserine is present on Ser-167. His-255 is an a dipeptide binding site. 3 residues coordinate Mn(2+): Asp-276, Asp-287, and His-370. Asp-287 is an a dipeptide binding site. Residues His-377 and Arg-398 each contribute to the a dipeptide site. The Mn(2+) site is built by Glu-412 and Glu-452.

This sequence belongs to the peptidase M24B family. Eukaryotic-type prolidase subfamily. In terms of assembly, homodimer. Requires Mn(2+) as cofactor.

It carries out the reaction Xaa-L-Pro dipeptide + H2O = an L-alpha-amino acid + L-proline. Dipeptidase that catalyzes the hydrolysis of dipeptides with a prolyl (Xaa-Pro) or hydroxyprolyl residue in the C-terminal position. The preferred dipeptide substrate is Gly-Pro, but other Xaa-Pro dipeptides, such as Ala-Pro, Met-Pro, Phe-Pro, Val-Pro and Leu-Pro, can be cleaved. Plays an important role in collagen metabolism because the high level of iminoacids in collagen. This chain is Xaa-Pro dipeptidase (Pepd), found in Rattus norvegicus (Rat).